We begin with the raw amino-acid sequence, 126 residues long: RutC family protein PH0854 (126 aa).

Belongs to the RutC family.

The protein is RutC family protein PH0854 of Pyrococcus horikoshii (strain ATCC 700860 / DSM 12428 / JCM 9974 / NBRC 100139 / OT-3).